The sequence spans 667 residues: MSSPSENHLLGPKTSFIDNRTSTSRPLHEIPSYQSLARRSSTWKRANIPQQKPSLVRRINYYIPVLHWLPNYSLRNIIWDVLAGCSTACLSVPIALSFAQTFLGVPPIYILTGTAIGPILYCLFTACPLISIGPEAGMCLLIAENIHQRVLSKADVPQETAILVTGLIAFIAGIINLAAGLFRLGFLDALVSPVLLRGCILSISMIIMINQGSVFFGFSGVKYKGSDFPIDKLMFLIRNMSKANIYTTILSCITISLLIGCRNLKSKLSAKYPRIVSIPDAVIILLLGSFLSKKFDWHSNYGIAILGEIKTTILLPKLPLPEKNKLHFITQSLQTGVMCSFLAFIDTVIAVKAISLQTNNLIRSNRELISLGAANIGSSLFCGLPICGGYLRTKCNIMSGARTQVATIACSVLILLATFFIMPVFSTVPTCMLASMVVSLGVSLFADAAVEIFKLARIRVWWELGIIFSIATCTMMFGLETGIIFGLSITVMQIIRHSTRSRIMFRSPTSNGTAEFILEDAASTLSHRTNPSSTAVESAPRILVVRIPEPLFFANVSQLEDRLNRLEKYGHPRMHPGETPYRRIEDIEVVVFDMVGVSSIDSSALFAFQRILKEYVEHQVEVHLVSLDPQVLHIFEKHGLLDLIGGYDHVQDSIKKVDALCDIELGV.

Residues 1–27 form a disordered region; that stretch reads MSSPSENHLLGPKTSFIDNRTSTSRPL. Residues 16–25 show a composition bias toward polar residues; it reads FIDNRTSTSR. 12 helical membrane-spanning segments follow: residues 77-97, 102-122, 162-182, 198-218, 240-260, 275-295, 301-321, 336-356, 368-388, 405-425, 433-453, and 465-485; these read IIWD…IALS, FLGV…ILYC, ILVT…AGLF, GCIL…FFGF, MSKA…LLIG, IVSI…SKKF, YGIA…LPLP, GVMC…AISL, LISL…PICG, VATI…MPVF, LASM…VEIF, and GIIF…GIIF. An STAS domain is found at 532–657; sequence SSTAVESAPR…DHVQDSIKKV (126 aa).

This sequence belongs to the SLC26A/SulP transporter (TC 2.A.53) family.

The protein localises to the endoplasmic reticulum membrane. Possible sulfate transporter. In Schizosaccharomyces pombe (strain 972 / ATCC 24843) (Fission yeast), this protein is Probable sulfate permease C320.05.